The chain runs to 182 residues: Large ribosomal subunit protein bL17 (182 aa).

Positions 126–182 (ERANRVAASKAKKAEAEAAEAKAEEAEEAPEVEADTATDKAAEAEAAEAADEAAEDK) are disordered. Basic and acidic residues predominate over residues 137–149 (KKAEAEAAEAKAE). Acidic residues-rich tracts occupy residues 150 to 161 (EAEEAPEVEADT) and 170 to 182 (EAAEAADEAAEDK).

It belongs to the bacterial ribosomal protein bL17 family. Part of the 50S ribosomal subunit. Contacts protein L32.

In Corynebacterium jeikeium (strain K411), this protein is Large ribosomal subunit protein bL17.